The primary structure comprises 145 residues: MIALIQRVTRASVTVEDEVTGEIGPGLLVLLGVEKEDDEQKANRLCERVLGYRIFSDADGKMNLNVQQAGGSVLVVSQFTLAADTERGMRPSFSGGAAPDRAQALYEYFVERCRQQAIDTQTGRFAADMQVELVNDGPVTFWLQV.

The short motif at 137 to 138 (GP) is the Gly-cisPro motif, important for rejection of L-amino acids element.

It belongs to the DTD family. Homodimer.

It is found in the cytoplasm. The enzyme catalyses glycyl-tRNA(Ala) + H2O = tRNA(Ala) + glycine + H(+). It carries out the reaction a D-aminoacyl-tRNA + H2O = a tRNA + a D-alpha-amino acid + H(+). In terms of biological role, an aminoacyl-tRNA editing enzyme that deacylates mischarged D-aminoacyl-tRNAs. Also deacylates mischarged glycyl-tRNA(Ala), protecting cells against glycine mischarging by AlaRS. Acts via tRNA-based rather than protein-based catalysis; rejects L-amino acids rather than detecting D-amino acids in the active site. By recycling D-aminoacyl-tRNA to D-amino acids and free tRNA molecules, this enzyme counteracts the toxicity associated with the formation of D-aminoacyl-tRNA entities in vivo and helps enforce protein L-homochirality. The chain is D-aminoacyl-tRNA deacylase from Salmonella enteritidis PT4 (strain P125109).